The following is a 669-amino-acid chain: DNA ligase (669 aa).

NAD(+)-binding positions include 34–38, 83–84, and E114; these read DAEYD and SL. Residue K116 is the N6-AMP-lysine intermediate of the active site. The NAD(+) site is built by R137, E171, K287, and K311. Residues C405, C408, C423, and C428 each contribute to the Zn(2+) site. The BRCT domain occupies 591–669; the sequence is NVESYFAGKT…EERFLQELNK (79 aa).

Belongs to the NAD-dependent DNA ligase family. LigA subfamily. Requires Mg(2+) as cofactor. Mn(2+) serves as cofactor.

It catalyses the reaction NAD(+) + (deoxyribonucleotide)n-3'-hydroxyl + 5'-phospho-(deoxyribonucleotide)m = (deoxyribonucleotide)n+m + AMP + beta-nicotinamide D-nucleotide.. DNA ligase that catalyzes the formation of phosphodiester linkages between 5'-phosphoryl and 3'-hydroxyl groups in double-stranded DNA using NAD as a coenzyme and as the energy source for the reaction. It is essential for DNA replication and repair of damaged DNA. The protein is DNA ligase of Bacillus cereus (strain 03BB102).